The following is a 364-amino-acid chain: DNA replication and repair protein RecF (364 aa).

Position 30–37 (30–37 (GDNAQGKT)) interacts with ATP.

It belongs to the RecF family.

The protein localises to the cytoplasm. Functionally, the RecF protein is involved in DNA metabolism; it is required for DNA replication and normal SOS inducibility. RecF binds preferentially to single-stranded, linear DNA. It also seems to bind ATP. The protein is DNA replication and repair protein RecF of Clostridium kluyveri (strain ATCC 8527 / DSM 555 / NBRC 12016 / NCIMB 10680 / K1).